Reading from the N-terminus, the 144-residue chain is Bacilliredoxin BrxA (144 aa).

Catalysis depends on nucleophile residues C53 and C55. C53 is subject to S-bacillithiol cysteine disulfide. The CXC active site motif signature appears at 53 to 55 (CGC). A disulfide bond links C53 and C55.

It belongs to the bacilliredoxin family. N-terminal Cys of the CXC active site motif can react with bacillithiol (BSH) to form mixed disulfides. S-bacillithiolation protects Cys residues against overoxidation by acting as a redox switch in response to oxidative stress.

Its function is as follows. S-bacillithiolation is the formation of mixed disulfide bonds between protein thiols and the general thiol reductant bacillithiol (BSH) under oxidative stress. BSH is an equivalent of glutathione (GSH) in Firmicutes. This protein is a dithiol bacilliredoxin, which debacillithiolates (removes BSH) the S-bacillithiolated OhrR (OhrR-SSB) in vitro and in vivo NaOCl-generated S-bacillithiolated MetE (MetE-SSB). Involved in maintaining redox homeostasis in response to disulfide stress conditions. Has a redox potential of -130 mV. Displays weak protein disulfide isomerase activity in vitro. This Bacillus subtilis (strain 168) protein is Bacilliredoxin BrxA.